Here is a 152-residue protein sequence, read N- to C-terminus: Xanthine-guanine phosphoribosyltransferase (152 aa).

5-phospho-alpha-D-ribose 1-diphosphate-binding positions include 37–38, R69, and 88–96; these read RG and DDLVDTGGT. Residue R69 participates in GMP binding. D89 serves as a coordination point for Mg(2+). Guanine-binding residues include D92 and I135. Xanthine is bound by residues D92 and I135. GMP contacts are provided by residues 92–96 and 134–135; these read DTGGT and WI.

This sequence belongs to the purine/pyrimidine phosphoribosyltransferase family. XGPT subfamily. Homotetramer. The cofactor is Mg(2+).

It localises to the cell inner membrane. It catalyses the reaction GMP + diphosphate = guanine + 5-phospho-alpha-D-ribose 1-diphosphate. The catalysed reaction is XMP + diphosphate = xanthine + 5-phospho-alpha-D-ribose 1-diphosphate. It carries out the reaction IMP + diphosphate = hypoxanthine + 5-phospho-alpha-D-ribose 1-diphosphate. It participates in purine metabolism; GMP biosynthesis via salvage pathway; GMP from guanine: step 1/1. The protein operates within purine metabolism; XMP biosynthesis via salvage pathway; XMP from xanthine: step 1/1. Its function is as follows. Purine salvage pathway enzyme that catalyzes the transfer of the ribosyl-5-phosphate group from 5-phospho-alpha-D-ribose 1-diphosphate (PRPP) to the N9 position of the 6-oxopurines guanine and xanthine to form the corresponding ribonucleotides GMP (guanosine 5'-monophosphate) and XMP (xanthosine 5'-monophosphate), with the release of PPi. To a lesser extent, also acts on hypoxanthine. This is Xanthine-guanine phosphoribosyltransferase from Pectobacterium carotovorum subsp. carotovorum (strain PC1).